The sequence spans 270 residues: Imidazole glycerol phosphate synthase subunit HisF (270 aa).

Residues Asp11 and Asp130 contribute to the active site.

Belongs to the HisA/HisF family. Heterodimer of HisH and HisF.

It is found in the cytoplasm. It catalyses the reaction 5-[(5-phospho-1-deoxy-D-ribulos-1-ylimino)methylamino]-1-(5-phospho-beta-D-ribosyl)imidazole-4-carboxamide + L-glutamine = D-erythro-1-(imidazol-4-yl)glycerol 3-phosphate + 5-amino-1-(5-phospho-beta-D-ribosyl)imidazole-4-carboxamide + L-glutamate + H(+). It participates in amino-acid biosynthesis; L-histidine biosynthesis; L-histidine from 5-phospho-alpha-D-ribose 1-diphosphate: step 5/9. Its function is as follows. IGPS catalyzes the conversion of PRFAR and glutamine to IGP, AICAR and glutamate. The HisF subunit catalyzes the cyclization activity that produces IGP and AICAR from PRFAR using the ammonia provided by the HisH subunit. The polypeptide is Imidazole glycerol phosphate synthase subunit HisF (Chloroflexus aggregans (strain MD-66 / DSM 9485)).